Reading from the N-terminus, the 61-residue chain is Small ribosomal subunit protein uS14 (61 aa).

The Zn(2+) site is built by Cys24, Cys27, Cys40, and Cys43.

This sequence belongs to the universal ribosomal protein uS14 family. Zinc-binding uS14 subfamily. Part of the 30S ribosomal subunit. Contacts proteins S3 and S10. Requires Zn(2+) as cofactor.

Binds 16S rRNA, required for the assembly of 30S particles and may also be responsible for determining the conformation of the 16S rRNA at the A site. This chain is Small ribosomal subunit protein uS14, found in Geobacillus thermodenitrificans (strain NG80-2).